A 146-amino-acid polypeptide reads, in one-letter code: Chorion class A protein Ld3/Ld29 (146 aa).

The N-terminal stretch at 1-21 (MNTFALLSVFIQACLVQSVFS) is a signal peptide.

It belongs to the chorion protein family.

In terms of biological role, this protein is one of many from the eggshell of the gypsy moth. This chain is Chorion class A protein Ld3/Ld29, found in Lymantria dispar (Gypsy moth).